Consider the following 141-residue polypeptide: uncharacterized protein (141 aa).

This is an uncharacterized protein from Schizosaccharomyces pombe (strain 972 / ATCC 24843) (Fission yeast).